A 555-amino-acid chain; its full sequence is MAETEHRPTNFIRQIIDKDLSNGLHDAIKTRFPPEPNGFLHIGHAKSICLNFGIAEDYTGSCNLRFDDTNPAKEDITFVNSIKEDVTWLGFTWDGEARYSSNYFDQLHAYAVELIEKGLAYVDFSAQDVMREMRGTLKEPGQNSPYRDTDVETNLKEFAKMTAGDYKEGECSLRAKIDMTSPFMCMRDPVIYRVKHAHHHQTGDKWCVYPMYDFTHCISDAIEGITHSLCTLEFQDNRRLYDWVIENISIDCTPRQYEFSRLNLEYTVLSKRRLIQLVEENHVSGWDDPRMPTIAGLRRRGYTPGSIVEFCKRIGVTKMDNMVEMSMLEACIRDDLNANAPRAMAVLDPIKLVIENYEEGKTETLVAPNHPNDESMGTRNIGFSREVYIEAEDFRESANKKFKRLVLEKEVRLRNAYVVKANRVEKDEEGNVTTVYCTYDPDTLGKDPADGRKVKGVIHWVDAATAQAAEFRLYDRLFNVPNPAAEENFTDAINPESLEVKQGWAEAGLIGHVPEVGAWQFERTGYFCVDKDSTDAKPVFNRTVGLRDTWAKIGE.

Residues 34-44 (PEPNGFLHIGH) carry the 'HIGH' region motif. Residues 35–37 (EPN) and 41–47 (HIGHAKS) each bind ATP. The L-glutamine site is built by D67 and Y212. Residues T231, 261–262 (RL), and 269–271 (LSK) each bind ATP. The 'KMSKS' region signature appears at 268-272 (VLSKR).

The protein belongs to the class-I aminoacyl-tRNA synthetase family. Monomer.

The protein localises to the cytoplasm. It catalyses the reaction tRNA(Gln) + L-glutamine + ATP = L-glutaminyl-tRNA(Gln) + AMP + diphosphate. The chain is Glutamine--tRNA ligase from Alteromonas mediterranea (strain DSM 17117 / CIP 110805 / LMG 28347 / Deep ecotype).